The following is a 206-amino-acid chain: Flavin prenyltransferase UbiX (206 aa).

Residues 11 to 13 (GAS), S37, 103 to 106 (SMST), and R138 each bind FMN. Dimethylallyl phosphate-binding residues include Y168 and R184.

This sequence belongs to the UbiX/PAD1 family.

The enzyme catalyses dimethylallyl phosphate + FMNH2 = prenylated FMNH2 + phosphate. Functionally, flavin prenyltransferase that catalyzes the synthesis of the prenylated FMN cofactor (prenyl-FMN) for 4-hydroxy-3-polyprenylbenzoic acid decarboxylase UbiD. The prenyltransferase is metal-independent and links a dimethylallyl moiety from dimethylallyl monophosphate (DMAP) to the flavin N5 and C6 atoms of FMN. This chain is Flavin prenyltransferase UbiX, found in Synechocystis sp. (strain ATCC 27184 / PCC 6803 / Kazusa).